We begin with the raw amino-acid sequence, 370 residues long: Cap-specific mRNA (nucleoside-2'-O-)-methyltransferase 1 (370 aa).

One can recognise a RrmJ-type SAM-dependent 2'-O-MTase domain in the interval 87–294; that stretch reads AFRNRAGHKL…ERYLVCIGFI (208 aa). Residues Gly130 and Asp207 each coordinate S-adenosyl-L-methionine. Lys248 functions as the Proton acceptor in the catalytic mechanism.

In terms of assembly, component of a complex composed of CBF5, GAR1, NHP2, MTR1, NOP10 and Tb11.01.8210.

The protein localises to the nucleus. The enzyme catalyses a 5'-end (N(7)-methyl 5'-triphosphoguanosine)-ribonucleoside in mRNA + S-adenosyl-L-methionine = a 5'-end (N(7)-methyl 5'-triphosphoguanosine)-(2'-O-methyl-ribonucleoside) in mRNA + S-adenosyl-L-homocysteine + H(+). Its function is as follows. S-adenosyl-L-methionine-dependent methyltransferase that mediates RNA cap1 2'-O-ribose methylation to the 5'-cap structure of spliced leader and U1 small nuclear RNAs. Methylates the ribose of the first nucleotide of a m(7)GpppG-capped RNA to produce m(7)GpppNmp (cap1). Cap1 modification is linked to higher levels of translation. Recognizes a guanosine cap on RNA independent of its N(7) methylation status. The protein is Cap-specific mRNA (nucleoside-2'-O-)-methyltransferase 1 (MTR1) of Trypanosoma brucei brucei (strain 927/4 GUTat10.1).